Reading from the N-terminus, the 138-residue chain is Lactoylglutathione lyase (138 aa).

The region spanning 2–126 (RLLHTMLRVG…DGYKIEFIQK (125 aa)) is the VOC domain. His-5 is a Ni(2+) binding site. Substrate is bound at residue Arg-9. Glu-56 lines the Ni(2+) pocket. Substrate-binding residues include Asn-60 and His-74. 2 residues coordinate Ni(2+): His-74 and Glu-122. The Proton donor/acceptor role is filled by Glu-122.

Belongs to the glyoxalase I family. Ni(2+) serves as cofactor.

The catalysed reaction is (R)-S-lactoylglutathione = methylglyoxal + glutathione. Its pathway is secondary metabolite metabolism; methylglyoxal degradation; (R)-lactate from methylglyoxal: step 1/2. Catalyzes the conversion of hemimercaptal, formed from methylglyoxal and glutathione, to S-lactoylglutathione. This chain is Lactoylglutathione lyase (gloA), found in Neisseria meningitidis serogroup A / serotype 4A (strain DSM 15465 / Z2491).